Here is a 425-residue protein sequence, read N- to C-terminus: Light-independent protochlorophyllide reductase subunit N (425 aa).

Positions 17, 42, and 103 each coordinate [4Fe-4S] cluster.

The protein belongs to the BchN/ChlN family. As to quaternary structure, protochlorophyllide reductase is composed of three subunits; ChlL, ChlN and ChlB. Forms a heterotetramer of two ChlB and two ChlN subunits. The cofactor is [4Fe-4S] cluster.

It catalyses the reaction chlorophyllide a + oxidized 2[4Fe-4S]-[ferredoxin] + 2 ADP + 2 phosphate = protochlorophyllide a + reduced 2[4Fe-4S]-[ferredoxin] + 2 ATP + 2 H2O. The protein operates within porphyrin-containing compound metabolism; chlorophyll biosynthesis (light-independent). Component of the dark-operative protochlorophyllide reductase (DPOR) that uses Mg-ATP and reduced ferredoxin to reduce ring D of protochlorophyllide (Pchlide) to form chlorophyllide a (Chlide). This reaction is light-independent. The NB-protein (ChlN-ChlB) is the catalytic component of the complex. The chain is Light-independent protochlorophyllide reductase subunit N from Parasynechococcus marenigrum (strain WH8102).